A 124-amino-acid polypeptide reads, in one-letter code: uncharacterized protein (124 aa).

2 disordered regions span residues 1–31 (MAQHAFQDQEQEEGRNSRQQKRKSFEDTMKP) and 59–124 (EDAR…YPQP). Polar residues-rich tracts occupy residues 65 to 86 (GMSSVTPTSSASKIGTKTSDAA) and 98 to 124 (TGEQPSGIQAQNLRGQSSDQSACYPQP).

This is an uncharacterized protein from Bos taurus (Bovine).